The sequence spans 95 residues: Hiracin-JM79 immunity factor (95 aa).

Imparts immunity to bacteriocin hiracin-JM79 to naturally sensitive host strains. This is Hiracin-JM79 immunity factor from Enterococcus hirae.